A 284-amino-acid polypeptide reads, in one-letter code: Four and a half LIM domains protein 5 (284 aa).

A C4-type zinc finger spans residues 8 to 32; it reads CQYCTASLLGKKYVLKDDNLYCISC. 4 consecutive LIM zinc-binding domains span residues 39-100, 101-160, 161-220, and 221-283; these read NYCE…ECSS, KCFH…KEFA, HYCN…LYAK, and KCAA…ADTD.

Interacts with CREM (via the third LIM domain). Interacts (via second LIM domain) with SPAG8.

It is found in the nucleus. Its function is as follows. May be involved in the regulation of spermatogenesis. Stimulates CREM transcriptional activity in a phosphorylation-independent manner. The polypeptide is Four and a half LIM domains protein 5 (Fhl5) (Rattus norvegicus (Rat)).